Here is a 122-residue protein sequence, read N- to C-terminus: Large ribosomal subunit protein uL14 (122 aa).

This sequence belongs to the universal ribosomal protein uL14 family. Part of the 50S ribosomal subunit. Forms a cluster with proteins L3 and L19. In the 70S ribosome, L14 and L19 interact and together make contacts with the 16S rRNA in bridges B5 and B8.

Functionally, binds to 23S rRNA. Forms part of two intersubunit bridges in the 70S ribosome. The chain is Large ribosomal subunit protein uL14 from Leuconostoc mesenteroides subsp. mesenteroides (strain ATCC 8293 / DSM 20343 / BCRC 11652 / CCM 1803 / JCM 6124 / NCDO 523 / NBRC 100496 / NCIMB 8023 / NCTC 12954 / NRRL B-1118 / 37Y).